The primary structure comprises 189 residues: MLKVGILALQGAFLEHARAVEACGALPVEIRKPGQLGDCRALIIPGGESTAIGKLMAAFDLLEPVRRFGAEGRPVFGTCAGMVLLAKDIEDSEQTRLGLMDITVRRNAFGRQVDSFEAKIHVPVLGDEPVRGVFIRAPHVTAVGPGVEILAAFEEKIILVRQDRLLAGAFHPELTADMRLHRYFLDFVD.

Position 47–49 (47–49 (GES)) interacts with L-glutamine. Residue C79 is the Nucleophile of the active site. L-glutamine is bound by residues R106 and 135–136 (IR). Residues H171 and E173 each act as charge relay system in the active site.

The protein belongs to the glutaminase PdxT/SNO family. In terms of assembly, in the presence of PdxS, forms a dodecamer of heterodimers. Only shows activity in the heterodimer.

It carries out the reaction aldehydo-D-ribose 5-phosphate + D-glyceraldehyde 3-phosphate + L-glutamine = pyridoxal 5'-phosphate + L-glutamate + phosphate + 3 H2O + H(+). The catalysed reaction is L-glutamine + H2O = L-glutamate + NH4(+). Its pathway is cofactor biosynthesis; pyridoxal 5'-phosphate biosynthesis. Functionally, catalyzes the hydrolysis of glutamine to glutamate and ammonia as part of the biosynthesis of pyridoxal 5'-phosphate. The resulting ammonia molecule is channeled to the active site of PdxS. The protein is Pyridoxal 5'-phosphate synthase subunit PdxT of Desulforudis audaxviator (strain MP104C).